We begin with the raw amino-acid sequence, 252 residues long: MLEYQVKIDSFEGPLDLLLHLINRLEIDIYDIPVAKITEQYLLYVHTMRELELDVASEYLVMAATLLSIKSRMLLPKQEEELFDEDLLEEEEDPREELIGKLIEYRKYKDAAQELKEREEERQNAFTKPPSDLSEFAKESEAKDTNLHVTVYDMLGAFQKVLNRKKITKPAPSRITRQEIPIEDKMNEIMNHLRKTKKRTNFMTLFQHDQKEHLVVTFLAVLELMKSHQIMLEQEGNFEDIYIIGSETIHDA.

A disordered region spans residues 117–136; sequence EREEERQNAFTKPPSDLSEF.

Belongs to the ScpA family. As to quaternary structure, component of a cohesin-like complex composed of ScpA, ScpB and the Smc homodimer, in which ScpA and ScpB bind to the head domain of Smc. The presence of the three proteins is required for the association of the complex with DNA.

It localises to the cytoplasm. Functionally, participates in chromosomal partition during cell division. May act via the formation of a condensin-like complex containing Smc and ScpB that pull DNA away from mid-cell into both cell halves. This Bacillus pumilus (strain SAFR-032) protein is Segregation and condensation protein A.